Reading from the N-terminus, the 179-residue chain is MVEAWYMDDSEEDQRRPHRLEPERPVSLAHLQQLGVFYWKLDADKYEDDPELEKIRKERKYCWMDIITICKDKLPNYEEKIKMFYEEHLHLDDEIRYILDGSGYFDVRDKEDKWIRIFMEKGDMITLPAGIYHRFTLDETNYVKAMRLFVGEPVWTAYNRPADHFEIRGQYLQFLAQKG.

Positions 1-12 (MVEAWYMDDSEE) are enriched in acidic residues. The interval 1-21 (MVEAWYMDDSEEDQRRPHRLE) is disordered. Residues His-88, His-90, Glu-94, and His-133 each contribute to the Fe(2+) site. Residues His-88, His-90, Glu-94, and His-133 each coordinate Ni(2+).

Belongs to the acireductone dioxygenase (ARD) family. Monomer. Interacts with MMP14. It depends on Fe(2+) as a cofactor. Requires Ni(2+) as cofactor.

The protein localises to the cytoplasm. It localises to the nucleus. The protein resides in the cell membrane. The catalysed reaction is 1,2-dihydroxy-5-(methylsulfanyl)pent-1-en-3-one + O2 = 4-methylsulfanyl-2-oxobutanoate + formate + 2 H(+). The enzyme catalyses 1,2-dihydroxy-5-(methylsulfanyl)pent-1-en-3-one + O2 = 3-(methylsulfanyl)propanoate + CO + formate + 2 H(+). It functions in the pathway amino-acid biosynthesis; L-methionine biosynthesis via salvage pathway; L-methionine from S-methyl-5-thio-alpha-D-ribose 1-phosphate: step 5/6. Functionally, catalyzes 2 different reactions between oxygen and the acireductone 1,2-dihydroxy-3-keto-5-methylthiopentene (DHK-MTPene) depending upon the metal bound in the active site. Fe-containing acireductone dioxygenase (Fe-ARD) produces formate and 2-keto-4-methylthiobutyrate (KMTB), the alpha-ketoacid precursor of methionine in the methionine recycle pathway. Ni-containing acireductone dioxygenase (Ni-ARD) produces methylthiopropionate, carbon monoxide and formate, and does not lie on the methionine recycle pathway. Also down-regulates cell migration mediated by MMP14. In Monodelphis domestica (Gray short-tailed opossum), this protein is Acireductone dioxygenase.